The following is a 915-amino-acid chain: Kinesin-like protein KIN-10A (915 aa).

A compositionally biased stretch (pro residues) spans 1-16 (MAPPTPSPRPGPPPTP). Disordered stretches follow at residues 1-28 (MAPP…KTPA) and 34-53 (HFPA…AGGT). Residues 56 to 391 (PVEVIGRIRN…LEYGAKAKCI (336 aa)) form the Kinesin motor domain. 137 to 144 (GPTGSGKS) provides a ligand contact to ATP. A coiled-coil region spans residues 426-517 (NLQKENKLRE…QRLKEVEREK (92 aa)). The disordered stretch occupies residues 676-718 (PAKKAFGDENNEPAKQTFGDENKQQPAKRVFGDENKDPSAWGA).

Belongs to the TRAFAC class myosin-kinesin ATPase superfamily. Kinesin family. KIN-10 subfamily.

The polypeptide is Kinesin-like protein KIN-10A (Oryza sativa subsp. japonica (Rice)).